The following is a 252-amino-acid chain: Ribosomal RNA small subunit methyltransferase J (252 aa).

Residues 104-105 (RD), 120-121 (ER), 156-157 (SS), and D174 each bind S-adenosyl-L-methionine.

The protein belongs to the methyltransferase superfamily. RsmJ family.

It is found in the cytoplasm. It carries out the reaction guanosine(1516) in 16S rRNA + S-adenosyl-L-methionine = N(2)-methylguanosine(1516) in 16S rRNA + S-adenosyl-L-homocysteine + H(+). Its function is as follows. Specifically methylates the guanosine in position 1516 of 16S rRNA. The sequence is that of Ribosomal RNA small subunit methyltransferase J from Yersinia enterocolitica serotype O:8 / biotype 1B (strain NCTC 13174 / 8081).